A 205-amino-acid polypeptide reads, in one-letter code: MSDTTTAENANEPRLITETGLDRRVADIIEPVLVDLGFRLVRVRMSGQNGLTLQVMTERNDGTMTVEDCEEVSKAISPVLDVEDPIDKAYHLEVSSPGIDRPMVRRSDFIRWQGHLLKCETSVLVEGRKRFRGKIVSVDEDGFRLERDQPAYGEEAGVTIPFTALSEARLILTDELIRDALTADKKAKAARAANENFEEEDRDIE.

It belongs to the RimP family.

It is found in the cytoplasm. Its function is as follows. Required for maturation of 30S ribosomal subunits. In Sinorhizobium medicae (strain WSM419) (Ensifer medicae), this protein is Ribosome maturation factor RimP.